A 159-amino-acid chain; its full sequence is Flagellar assembly factor FliW (159 aa).

This sequence belongs to the FliW family. Interacts with translational regulator CsrA and flagellin(s).

The protein resides in the cytoplasm. Acts as an anti-CsrA protein, binds CsrA and prevents it from repressing translation of its target genes, one of which is flagellin. Binds to flagellin and participates in the assembly of the flagellum. This Geobacter sulfurreducens (strain ATCC 51573 / DSM 12127 / PCA) protein is Flagellar assembly factor FliW.